A 94-amino-acid chain; its full sequence is Large ribosomal subunit protein uL23 (94 aa).

This sequence belongs to the universal ribosomal protein uL23 family. In terms of assembly, part of the 50S ribosomal subunit. Contacts protein L29, and trigger factor when it is bound to the ribosome.

Functionally, one of the early assembly proteins it binds 23S rRNA. One of the proteins that surrounds the polypeptide exit tunnel on the outside of the ribosome. Forms the main docking site for trigger factor binding to the ribosome. The sequence is that of Large ribosomal subunit protein uL23 from Exiguobacterium sibiricum (strain DSM 17290 / CCUG 55495 / CIP 109462 / JCM 13490 / 255-15).